A 252-amino-acid polypeptide reads, in one-letter code: Hydroxyacylglutathione hydrolase (252 aa).

7 residues coordinate Zn(2+): His54, His56, Asp58, His59, His111, Asp128, and His166.

This sequence belongs to the metallo-beta-lactamase superfamily. Glyoxalase II family. As to quaternary structure, monomer. Zn(2+) serves as cofactor.

The enzyme catalyses an S-(2-hydroxyacyl)glutathione + H2O = a 2-hydroxy carboxylate + glutathione + H(+). Its pathway is secondary metabolite metabolism; methylglyoxal degradation; (R)-lactate from methylglyoxal: step 2/2. Thiolesterase that catalyzes the hydrolysis of S-D-lactoyl-glutathione to form glutathione and D-lactic acid. This Vibrio campbellii (strain ATCC BAA-1116) protein is Hydroxyacylglutathione hydrolase.